The following is a 607-amino-acid chain: Rap1 GTPase-GDP dissociation stimulator 1 (607 aa).

The Nuclear export signal (NES) signature appears at 4-13 (LSDTLKKLKI). 2 ARM repeats span residues 89–131 (GLIS…DQAG) and 170–211 (DSLQ…NLAE). A prevents binding to prenylated RHOA region spans residues 122 to 170 (EGRSAVDQAGGAQIVIDHLRSLCSITDPANEKLLTVFCGMLMNYSNEND). Residue K230 is modified to N6-acetyllysine. Residues 239–255 (DKREMIFEVLAPLAEND) form an interacts with polybasic regions in GTPases region. ARM repeat units follow at residues 347–390 (DANC…NLAI), 391–431 (PVIN…MLID), and 479–519 (SKDV…LIAA). Residues 379 to 428 (HAALSALRNLAIPVINKAKMLSAGVTEAVLKFLKSEMPPVQFKLLGTLRM) are critical for catalytic activity.

Interacts with RABL3. Interacts with RHOT1. As to quaternary structure, interacts with unprenylated RHOA; the interaction is direct. Interacts with RAP1A. Interacts with KRAS. Interacts with RAC1. Interacts with RAP1B. Preferentially interacts with unprenylated GTPases that will become geranylgeranylated. May also interact with prenylated GTPases. In terms of assembly, interacts with prenylated RHOA; the interaction is direct and in a 1:1 stoichiometry. Interacts with RAP1A. Interacts with KRAS. Interacts with RAC1. Interacts with RAP1B. Preferentially interacts with prenylated GTPases. Post-translationally, forms covalent cross-links mediated by transglutaminase TGM2, between a glutamine and the epsilon-amino group of a lysine residue, forming homopolymers and heteropolymers.

The protein resides in the cytoplasm. The protein localises to the cytosol. Its subcellular location is the endoplasmic reticulum. It localises to the mitochondrion. It is found in the nucleus. Functionally, acts as a GEF (guanine nucleotide exchange factor) for the Rho family of small GTP-binding proteins (G proteins) that stimulates the dissociation of GDP to enable subsequent binding of GTP. Additionally, appears to chaperone the processing and/or trafficking of small GTPases containing a C-terminal polybasic region independently of GEF activity. Targets include RAP1A/RAP1B, RHOA, RHOB, RHOC, RAC1 and KRAS. Regulates mitochondrial dynamics by controlling RHOT function to promote mitochondrial fission during high calcium conditions. Able to promote the Ca(2+) release from the endoplasmic reticulum via both inositol trisphosphate (Ins3P) and ryanodine sensitive receptors leading to a enhanced mitochondrial Ca(2+) uptake. In terms of biological role, acts as a GEF (guanine nucleotide exchange factor) for unprenylated RHOA. Chaperones the entry and passage of small GTPases through the prenylation pathway. Recognizes the last amino acid in the GTPase C-terminal CAAX motif with a preference for 'Leu' over 'Met', indicating involvement in the geranylgeranylation pathway. Acts as a GEF (guanine nucleotide exchange factor) for prenylated RHOA. Acts as a GEF for RHOC. Chaperones the downstream trafficking and/or processing of small newly prenylated GTPases. Escorts RAC1 to the nucleus. The polypeptide is Rap1 GTPase-GDP dissociation stimulator 1 (Homo sapiens (Human)).